Here is a 146-residue protein sequence, read N- to C-terminus: uncharacterized protein (146 aa).

The helical transmembrane segment at 7–24 (VIALFLVTGLTLYAIRLL) threads the bilayer.

The protein localises to the membrane. This is an uncharacterized protein from Haemophilus influenzae (strain ATCC 51907 / DSM 11121 / KW20 / Rd).